A 102-amino-acid polypeptide reads, in one-letter code: uncharacterized protein (102 aa).

This is an uncharacterized protein from Haemophilus influenzae (strain ATCC 51907 / DSM 11121 / KW20 / Rd).